Consider the following 102-residue polypeptide: Citrate lyase acyl carrier protein (102 aa).

Ser14 is subject to O-(phosphoribosyl dephospho-coenzyme A)serine.

Belongs to the CitD family. As to quaternary structure, oligomer with a subunit composition of (alpha,beta,gamma)6.

Its subcellular location is the cytoplasm. Functionally, covalent carrier of the coenzyme of citrate lyase. The sequence is that of Citrate lyase acyl carrier protein from Streptococcus equi subsp. zooepidemicus (strain MGCS10565).